A 106-amino-acid chain; its full sequence is PAT complex subunit Asterix (106 aa).

The tract at residues 1-29 is disordered; that stretch reads MSANNMSDPRRPNKVLRYKPPPSECNPAL. Position 2 is an N-acetylserine (S2). Over 2–32 the chain is Cytoplasmic; sequence SANNMSDPRRPNKVLRYKPPPSECNPALDDP. A helical membrane pass occupies residues 33–51; that stretch reads TPDYMNLLGMIFSMCGLML. Position 52 (K52) is a topological domain, lumenal. Residues 53 to 70 traverse the membrane as a helical segment; sequence LKWCAWVAVYCSFISFAN. Over 71–74 the chain is Cytoplasmic; that stretch reads SRSS. Residues 75 to 95 form a helical membrane-spanning segment; sequence EDTKQMMSSFMLSISAVVMSY. Topologically, residues 96–106 are lumenal; sequence LQNPQPMTPPW.

Belongs to the Asterix family. Component of the PAT complex, composed of WDR83OS/Asterix and CCDC47. The PAT complex is part of the multi-pass translocon (MPT) complex, composed of three subcomplexes, the GEL complex (composed of RAB5IF/OPTI and TMCO1), the BOS complex (composed of NCLN/Nicalin, NOMO1 and TMEM147) and the PAT complex (composed of WDR83OS/Asterix and CCDC47). The MPT complex associates with the SEC61 complex.

The protein localises to the endoplasmic reticulum membrane. Its function is as follows. Component of the multi-pass translocon (MPT) complex that mediates insertion of multi-pass membrane proteins into the lipid bilayer of membranes. The MPT complex takes over after the SEC61 complex: following membrane insertion of the first few transmembrane segments of proteins by the SEC61 complex, the MPT complex occludes the lateral gate of the SEC61 complex to promote insertion of subsequent transmembrane regions. Within the MPT complex, the PAT subcomplex sequesters any highly polar regions in the transmembrane domains away from the non-polar membrane environment until they can be buried in the interior of the fully assembled protein. Within the PAT subcomplex, WDR83OS/Asterix binds to and redirects the substrate to a location behind the SEC61 complex. In Bos taurus (Bovine), this protein is PAT complex subunit Asterix (WDR83OS).